The following is a 406-amino-acid chain: Peptidase T (406 aa).

Zn(2+) is bound at residue His-78. Residue Asp-80 is part of the active site. Asp-139 serves as a coordination point for Zn(2+). The Proton acceptor role is filled by Glu-173. Residues Glu-174, Asp-196, and His-378 each coordinate Zn(2+).

This sequence belongs to the peptidase M20B family. Requires Zn(2+) as cofactor.

It is found in the cytoplasm. It carries out the reaction Release of the N-terminal residue from a tripeptide.. Functionally, cleaves the N-terminal amino acid of tripeptides. This chain is Peptidase T, found in Clostridium perfringens (strain SM101 / Type A).